The chain runs to 507 residues: Transcription factor NIGTH1 (507 aa).

2 disordered regions span residues 139 to 172 and 238 to 268; these read ASAA…TALD and SREA…RKAR. A compositionally biased stretch (basic and acidic residues) spans 152 to 161; sequence PKEHSEHHPL. The HTH myb-type domain occupies 263 to 323; sequence PHRKARRCWS…HLQKYRLHTR (61 aa). The segment at residues 294 to 319 is a DNA-binding region (H-T-H motif); the sequence is PKQIRELMKVDGLTNDEVKSHLQKYR. Residues 402–507 are disordered; the sequence is AVAPPPPLPP…TTTSAGAINY (106 aa). Over residues 412–433 the composition is skewed to low complexity; that stretch reads QQQLAPPYSAKSSASARLGSPD. Residues 437–446 show a composition bias toward gly residues; it reads RGSGGGGGAA. Acidic residues predominate over residues 456 to 476; that stretch reads ESIEEEGEGEEREDDDDDDEM.

Interacts with ACA5.

The protein resides in the nucleus. In terms of biological role, probable transcription factor that may play a role in regulatory networks controlling development and metabolism. The sequence is that of Transcription factor NIGTH1 from Oryza sativa subsp. japonica (Rice).